The chain runs to 394 residues: Elongation factor Tu (394 aa).

The 195-residue stretch at 10 to 204 folds into the tr-type G domain; sequence KPHVNVGTIG…AVDEWIPTPT (195 aa). The tract at residues 19-26 is G1; that stretch reads GHIDHGKT. 19 to 26 is a GTP binding site; that stretch reads GHIDHGKT. T26 contacts Mg(2+). The interval 60–64 is G2; sequence GITIN. The tract at residues 81–84 is G3; the sequence is DCPG. GTP is bound by residues 81–85 and 136–139; these read DCPGH and NKCD. A G4 region spans residues 136-139; it reads NKCD. Residues 174–176 are G5; it reads SAL.

The protein belongs to the TRAFAC class translation factor GTPase superfamily. Classic translation factor GTPase family. EF-Tu/EF-1A subfamily. As to quaternary structure, monomer.

The protein resides in the cytoplasm. It carries out the reaction GTP + H2O = GDP + phosphate + H(+). Its function is as follows. GTP hydrolase that promotes the GTP-dependent binding of aminoacyl-tRNA to the A-site of ribosomes during protein biosynthesis. The protein is Elongation factor Tu of Mycoplasma genitalium (strain ATCC 33530 / DSM 19775 / NCTC 10195 / G37) (Mycoplasmoides genitalium).